The chain runs to 38 residues: Large ribosomal subunit protein bL36 (38 aa).

The protein belongs to the bacterial ribosomal protein bL36 family.

The polypeptide is Large ribosomal subunit protein bL36 (Hahella chejuensis (strain KCTC 2396)).